A 714-amino-acid chain; its full sequence is Polynucleotide 5'-hydroxyl-kinase NOL9 (714 aa).

Position 2 is an N-acetylalanine (Ala2). Positions 31–47 match the Nucleolar localization signal motif; that stretch reads RRGRRRFGVLTRVELRR. Positions 80 to 133 are disordered; it reads ARSRPAPRSPPTPSVPPAPCTASATCSLLNPRNHSTPQSRAGRPVRKVSPNVTQ. Pro residues predominate over residues 86-98; sequence PRSPPTPSVPPAP. The span at 107–118 shows a compositional bias: polar residues; that stretch reads LLNPRNHSTPQS. The residue at position 128 (Ser128) is a Phosphoserine. 322 to 329 serves as a coordination point for ATP; the sequence is GACDIGKS. Residues 495–714 form an interaction with LAS1L region; that stretch reads FTYEEKESSP…PRHKLRQRRK (220 aa). A Glycyl lysine isopeptide (Lys-Gly) (interchain with G-Cter in SUMO2) cross-link involves residue Lys500. Ser502 is subject to Phosphoserine.

It belongs to the Clp1 family. NOL9/GRC3 subfamily. In terms of assembly, interacts with PELP1, WDR18 and SENP3. Interacts with LAS1L to form an ITS2 pre-rRNA endonuclease-kinase complex.

It is found in the nucleus. The protein resides in the nucleolus. It carries out the reaction a 5'-end dephospho-2'-deoxyribonucleoside-DNA + ATP = a 5'-end 5'-phospho-2'-deoxyribonucleoside-DNA + ADP + H(+). The enzyme catalyses a 5'-end dephospho-ribonucleoside-RNA + ATP = a 5'-end 5'-phospho-ribonucleoside-RNA + ADP + H(+). Its function is as follows. Polynucleotide kinase that can phosphorylate the 5'-hydroxyl groups of single-stranded and double-stranded RNA and DNA substrates. Involved in rRNA processing and its kinase activity is required for the processing of the 32S precursor into 5.8S and 28S rRNAs, more specifically for the generation of the major 5.8S(S) form. Required for the efficient pre-rRNA processing of internal transcribed spacer 2 (ITS2). Associates with LAS1L to form an ITS2 pre-rRNA endonuclease-kinase complex and is responsible for the transport of this complex into the nucleolus. The polypeptide is Polynucleotide 5'-hydroxyl-kinase NOL9 (Mus musculus (Mouse)).